We begin with the raw amino-acid sequence, 113 residues long: Ig kappa chain V-II region 17S29.1 (113 aa).

The segment at 1-23 (DIVMTQAVFSNPVTLGTSASISC) is framework-1. Cys23 and Cys93 are oxidised to a cystine. A complementarity-determining-1 region spans residues 24-39 (RSSKSLLHSNGITYLY). The tract at residues 40-54 (WYLQKPGQSPQLLLY) is framework-2. Residues 55-61 (QMSNLAS) form a complementarity-determining-2 region. The interval 62-93 (GVPDRFSSSGSGTDFTLRISRVEAEDVGVYYC) is framework-3. The segment at 94–102 (AHNLELPYT) is complementarity-determining-3. Residues 103–112 (FGGGTKLEIK) form a framework-4 region.

Functionally, anti-streptococcal group A carbohydrate antibody. This Mus musculus (Mouse) protein is Ig kappa chain V-II region 17S29.1.